A 1072-amino-acid chain; its full sequence is DNA-directed RNA polymerase subunit beta (1072 aa).

This sequence belongs to the RNA polymerase beta chain family. In terms of assembly, in plastids the minimal PEP RNA polymerase catalytic core is composed of four subunits: alpha, beta, beta', and beta''. When a (nuclear-encoded) sigma factor is associated with the core the holoenzyme is formed, which can initiate transcription.

The protein resides in the plastid. Its subcellular location is the chloroplast. It catalyses the reaction RNA(n) + a ribonucleoside 5'-triphosphate = RNA(n+1) + diphosphate. Functionally, DNA-dependent RNA polymerase catalyzes the transcription of DNA into RNA using the four ribonucleoside triphosphates as substrates. The protein is DNA-directed RNA polymerase subunit beta of Nasturtium officinale (Watercress).